The chain runs to 566 residues: Oxygen-dependent choline dehydrogenase (566 aa).

7–36 (DYIICGAGSAGNVLATRLTEDPNVTVLLLE) contacts FAD. Positions 182 to 204 (YQQEGFGPMDRTVTPKGRRASTA) are disordered. Histidine 474 serves as the catalytic Proton acceptor.

This sequence belongs to the GMC oxidoreductase family. The cofactor is FAD.

The catalysed reaction is choline + A = betaine aldehyde + AH2. It carries out the reaction betaine aldehyde + NAD(+) + H2O = glycine betaine + NADH + 2 H(+). It functions in the pathway amine and polyamine biosynthesis; betaine biosynthesis via choline pathway; betaine aldehyde from choline (cytochrome c reductase route): step 1/1. In terms of biological role, involved in the biosynthesis of the osmoprotectant glycine betaine. Catalyzes the oxidation of choline to betaine aldehyde and betaine aldehyde to glycine betaine at the same rate. In Burkholderia multivorans (strain ATCC 17616 / 249), this protein is Oxygen-dependent choline dehydrogenase.